A 203-amino-acid chain; its full sequence is B-cell CLL/lymphoma 7 protein family member B-A (203 aa).

Disordered stretches follow at residues 55 to 80 and 94 to 148; these read KEKEKSKVSVGGEMQRKNFPSEESSD and SNQS…EIME. Residues 109–129 are compositionally biased toward low complexity; sequence ADSSNNSSPPASEPVSPAPQS.

Belongs to the BCL7 family.

In Danio rerio (Zebrafish), this protein is B-cell CLL/lymphoma 7 protein family member B-A (bcl7ba).